Consider the following 100-residue polypeptide: uncharacterized protein (100 aa).

A run of 2 helical transmembrane segments spans residues 30–50 and 69–89; these read FHIP…PLAF and FLLI…LPFF.

It localises to the cytoplasm. The protein resides in the nucleus membrane. This is an uncharacterized protein from Schizosaccharomyces pombe (strain 972 / ATCC 24843) (Fission yeast).